The chain runs to 28 residues: Sarcolamban A (28 aa).

A helical membrane pass occupies residues 7-27 (LFTTFGILAILLFFLYLIYAV).

In terms of assembly, interacts with SERCA. In terms of tissue distribution, strongly expressed in embryonic and larval somatic muscles and postembryonic heart.

It is found in the sarcoplasmic reticulum membrane. The protein resides in the cell membrane. Its subcellular location is the sarcolemma. The protein localises to the T-tubule. In terms of biological role, plays an essential role in the regulation of calcium transport at the sarcoplasmic reticulum (SR), which is secondarily required for regular muscle contraction. The chain is Sarcolamban A from Drosophila melanogaster (Fruit fly).